The following is a 327-amino-acid chain: GTPase Obg (327 aa).

Positions 3–160 constitute an Obg domain; sequence NKFTDFIKIY…FIFVLELKIL (158 aa). Residues 161–327 form the OBG-type G domain; it reads ADVGLIGLPN…LIYYICNILS (167 aa). Residues 167–174, 192–196, 214–217, 281–284, and 308–310 each bind GTP; these read GLPNSGKS, FTTLN, DIPG, SKSD, and SSF. Positions 174 and 194 each coordinate Mg(2+).

It belongs to the TRAFAC class OBG-HflX-like GTPase superfamily. OBG GTPase family. In terms of assembly, monomer. It depends on Mg(2+) as a cofactor.

The protein localises to the cytoplasm. Functionally, an essential GTPase which binds GTP, GDP and possibly (p)ppGpp with moderate affinity, with high nucleotide exchange rates and a fairly low GTP hydrolysis rate. Plays a role in control of the cell cycle, stress response, ribosome biogenesis and in those bacteria that undergo differentiation, in morphogenesis control. This Karelsulcia muelleri (strain GWSS) (Sulcia muelleri) protein is GTPase Obg.